Consider the following 669-residue polypeptide: UvrABC system protein B (669 aa).

The Helicase ATP-binding domain occupies 26-414; it reads TNFHAGIAKQ…AGEVIELLVR (389 aa). 39–46 contributes to the ATP binding site; that stretch reads GVTGSGKT. Residues 92–115 carry the Beta-hairpin motif; it reads YYDYYQPEAYVPASDTFIEKDSSI. One can recognise a Helicase C-terminal domain in the interval 435-597; that stretch reads LISQINVCIK…SVVRPISDIL (163 aa). The 36-residue stretch at 631–666 folds into the UVR domain; the sequence is AAQMKVLEQQMYQHARDLEFEDAARIRDQIQRLREA.

This sequence belongs to the UvrB family. Forms a heterotetramer with UvrA during the search for lesions. Interacts with UvrC in an incision complex.

The protein localises to the cytoplasm. The UvrABC repair system catalyzes the recognition and processing of DNA lesions. A damage recognition complex composed of 2 UvrA and 2 UvrB subunits scans DNA for abnormalities. Upon binding of the UvrA(2)B(2) complex to a putative damaged site, the DNA wraps around one UvrB monomer. DNA wrap is dependent on ATP binding by UvrB and probably causes local melting of the DNA helix, facilitating insertion of UvrB beta-hairpin between the DNA strands. Then UvrB probes one DNA strand for the presence of a lesion. If a lesion is found the UvrA subunits dissociate and the UvrB-DNA preincision complex is formed. This complex is subsequently bound by UvrC and the second UvrB is released. If no lesion is found, the DNA wraps around the other UvrB subunit that will check the other stand for damage. The chain is UvrABC system protein B from Xylella fastidiosa (strain 9a5c).